We begin with the raw amino-acid sequence, 95 residues long: Aspartyl/glutamyl-tRNA(Asn/Gln) amidotransferase subunit C (95 aa).

The protein belongs to the GatC family. Heterotrimer of A, B and C subunits.

It catalyses the reaction L-glutamyl-tRNA(Gln) + L-glutamine + ATP + H2O = L-glutaminyl-tRNA(Gln) + L-glutamate + ADP + phosphate + H(+). The catalysed reaction is L-aspartyl-tRNA(Asn) + L-glutamine + ATP + H2O = L-asparaginyl-tRNA(Asn) + L-glutamate + ADP + phosphate + 2 H(+). Its function is as follows. Allows the formation of correctly charged Asn-tRNA(Asn) or Gln-tRNA(Gln) through the transamidation of misacylated Asp-tRNA(Asn) or Glu-tRNA(Gln) in organisms which lack either or both of asparaginyl-tRNA or glutaminyl-tRNA synthetases. The reaction takes place in the presence of glutamine and ATP through an activated phospho-Asp-tRNA(Asn) or phospho-Glu-tRNA(Gln). In Acidithiobacillus ferrooxidans (strain ATCC 23270 / DSM 14882 / CIP 104768 / NCIMB 8455) (Ferrobacillus ferrooxidans (strain ATCC 23270)), this protein is Aspartyl/glutamyl-tRNA(Asn/Gln) amidotransferase subunit C.